A 544-amino-acid chain; its full sequence is Membrane protein insertase YidC (544 aa).

5 consecutive transmembrane segments (helical) span residues 15 to 35 (LFLI…MLSF), 321 to 341 (LWYL…DVIP), 343 to 363 (WGLS…PLTF), 409 to 429 (LGGC…YSLV), and 506 to 526 (MPIM…IYWI).

Belongs to the OXA1/ALB3/YidC family. Type 1 subfamily. As to quaternary structure, interacts with the Sec translocase complex via SecD. Specifically interacts with transmembrane segments of nascent integral membrane proteins during membrane integration.

The protein resides in the cell inner membrane. Functionally, required for the insertion and/or proper folding and/or complex formation of integral membrane proteins into the membrane. Involved in integration of membrane proteins that insert both dependently and independently of the Sec translocase complex, as well as at least some lipoproteins. Aids folding of multispanning membrane proteins. The protein is Membrane protein insertase YidC of Borrelia garinii subsp. bavariensis (strain ATCC BAA-2496 / DSM 23469 / PBi) (Borreliella bavariensis).